A 607-amino-acid polypeptide reads, in one-letter code: Elongation factor 4 (607 aa).

A tr-type G domain is found at 11-193 (EKIRNFSIIA…QIVEKVPAPQ (183 aa)). GTP-binding positions include 23–28 (DHGKST) and 140–143 (NKID).

It belongs to the TRAFAC class translation factor GTPase superfamily. Classic translation factor GTPase family. LepA subfamily.

It is found in the cell membrane. It carries out the reaction GTP + H2O = GDP + phosphate + H(+). Required for accurate and efficient protein synthesis under certain stress conditions. May act as a fidelity factor of the translation reaction, by catalyzing a one-codon backward translocation of tRNAs on improperly translocated ribosomes. Back-translocation proceeds from a post-translocation (POST) complex to a pre-translocation (PRE) complex, thus giving elongation factor G a second chance to translocate the tRNAs correctly. Binds to ribosomes in a GTP-dependent manner. This chain is Elongation factor 4, found in Lactococcus lactis subsp. cremoris (strain MG1363).